Consider the following 434-residue polypeptide: Chaperone SurA (434 aa).

Positions 1-22 (MKHSKKIVTALLALAMSQTVMA) are cleaved as a signal peptide. 2 consecutive PpiC domains span residues 173-274 (EVEF…KVMD) and 283-383 (VEEV…QLMD).

It localises to the periplasm. The enzyme catalyses [protein]-peptidylproline (omega=180) = [protein]-peptidylproline (omega=0). Chaperone involved in the correct folding and assembly of outer membrane proteins. Recognizes specific patterns of aromatic residues and the orientation of their side chains, which are found more frequently in integral outer membrane proteins. May act in both early periplasmic and late outer membrane-associated steps of protein maturation. This is Chaperone SurA from Shewanella denitrificans (strain OS217 / ATCC BAA-1090 / DSM 15013).